We begin with the raw amino-acid sequence, 91 residues long: Gas vesicle protein K (91 aa).

Belongs to the gas vesicle GvpK family.

The protein resides in the gas vesicle. Might be involved in nucleating gas vesicle formation. Gas vesicles are hollow, gas filled proteinaceous nanostructures found in some microorganisms. It is not clear what function gas vesicles perform in soil bacteria. This Streptomyces sp. (strain CB03234) protein is Gas vesicle protein K.